The chain runs to 362 residues: Acyl-CoA-binding domain-containing protein 3 (362 aa).

An N-terminal signal peptide occupies residues 1–22 (MEVFLEMLLTAVVALLFSFLLA). Disordered stretches follow at residues 132–151 (QDEQ…SPEN) and 193–214 (VEKS…EKTE). The stretch at 192-221 (RVEKSSNMVEESDAEAENEEKTELTIEEDD) forms a coiled coil. Positions 231–318 (LEKAFAAAVN…VSKEIPGLTK (88 aa)) constitute an ACB domain. Residues 260 to 264 (FGLHK), lysine 286, and tyrosine 305 each bind an acyl-CoA. A disordered region spans residues 329 to 362 (METSVGLPPNSGSLEDPTNLVTTGVDESSKNGIP).

Belongs to the ACBP family. In terms of tissue distribution, expressed in roots, stems, leaves, flowers and siliques.

The protein resides in the secreted. It is found in the extracellular space. Functionally, binds medium- and long-chain acyl-CoA esters with very high affinity. Can interact in vitro with arachidonyl-CoA, barely with oleoyl-CoA, but not with palmitoyl-CoA. The polypeptide is Acyl-CoA-binding domain-containing protein 3 (ACBP3) (Arabidopsis thaliana (Mouse-ear cress)).